A 427-amino-acid chain; its full sequence is Enolase (427 aa).

Q163 lines the (2R)-2-phosphoglycerate pocket. The active-site Proton donor is the E205. Mg(2+) is bound by residues D242, E285, and D312. Residues K337, R366, S367, and K388 each coordinate (2R)-2-phosphoglycerate. K337 serves as the catalytic Proton acceptor.

Belongs to the enolase family. Mg(2+) is required as a cofactor.

Its subcellular location is the cytoplasm. The protein localises to the secreted. It localises to the cell surface. The catalysed reaction is (2R)-2-phosphoglycerate = phosphoenolpyruvate + H2O. It functions in the pathway carbohydrate degradation; glycolysis; pyruvate from D-glyceraldehyde 3-phosphate: step 4/5. Catalyzes the reversible conversion of 2-phosphoglycerate (2-PG) into phosphoenolpyruvate (PEP). It is essential for the degradation of carbohydrates via glycolysis. The polypeptide is Enolase (Burkholderia vietnamiensis (strain G4 / LMG 22486) (Burkholderia cepacia (strain R1808))).